The following is a 210-amino-acid chain: Floral homeotic protein FBP1 (210 aa).

Positions Arg3–Phe57 constitute an MADS-box domain. Positions His82–Asn173 constitute a K-box domain.

Petals.

It localises to the nucleus. Functionally, probable transcription factor. This Petunia hybrida (Petunia) protein is Floral homeotic protein FBP1 (FBP1).